Here is a 383-residue protein sequence, read N- to C-terminus: tRNA(Met) cytidine acetate ligase (383 aa).

Residues 7–20 (IAEF…HEFL), Gly-101, Asn-153, and 178–179 (RI) contribute to the ATP site.

The protein belongs to the TmcAL family.

The protein localises to the cytoplasm. It carries out the reaction cytidine(34) in elongator tRNA(Met) + acetate + ATP = N(4)-acetylcytidine(34) in elongator tRNA(Met) + AMP + diphosphate. In terms of biological role, catalyzes the formation of N(4)-acetylcytidine (ac(4)C) at the wobble position of elongator tRNA(Met), using acetate and ATP as substrates. First activates an acetate ion to form acetyladenylate (Ac-AMP) and then transfers the acetyl group to tRNA to form ac(4)C34. This chain is tRNA(Met) cytidine acetate ligase, found in Lactobacillus acidophilus (strain ATCC 700396 / NCK56 / N2 / NCFM).